A 464-amino-acid chain; its full sequence is Na(+)/H(+) antiporter NhaA 1 (464 aa).

11 consecutive transmembrane segments (helical) span residues 41–61, 85–105, 121–141, 150–170, 180–200, 207–227, 234–254, 329–349, 363–383, 399–419, and 428–448; these read GGLI…SPLA, LHHW…GLEL, VLPI…YMSL, GWGI…ALLA, FLVA…AVFY, SFLI…MIGI, FFVG…ATLA, VAFF…IDFG, VVFG…WLAI, IIGA…IAEL, and IIQA…AGYL.

This sequence belongs to the NhaA Na(+)/H(+) (TC 2.A.33) antiporter family.

Its subcellular location is the cell inner membrane. It catalyses the reaction Na(+)(in) + 2 H(+)(out) = Na(+)(out) + 2 H(+)(in). In terms of biological role, na(+)/H(+) antiporter that extrudes sodium in exchange for external protons. The protein is Na(+)/H(+) antiporter NhaA 1 of Saccharophagus degradans (strain 2-40 / ATCC 43961 / DSM 17024).